Here is a 265-residue protein sequence, read N- to C-terminus: Type III pantothenate kinase (265 aa).

6-13 (DVGNTNIV) serves as a coordination point for ATP. Residue 112 to 115 (GADR) coordinates substrate. The active-site Proton acceptor is the Asp114. Residue Asp134 coordinates K(+). Thr137 serves as a coordination point for ATP. Residue Thr189 coordinates substrate.

Belongs to the type III pantothenate kinase family. As to quaternary structure, homodimer. NH4(+) serves as cofactor. Requires K(+) as cofactor.

Its subcellular location is the cytoplasm. The catalysed reaction is (R)-pantothenate + ATP = (R)-4'-phosphopantothenate + ADP + H(+). Its pathway is cofactor biosynthesis; coenzyme A biosynthesis; CoA from (R)-pantothenate: step 1/5. Its function is as follows. Catalyzes the phosphorylation of pantothenate (Pan), the first step in CoA biosynthesis. The protein is Type III pantothenate kinase of Saccharopolyspora erythraea (strain ATCC 11635 / DSM 40517 / JCM 4748 / NBRC 13426 / NCIMB 8594 / NRRL 2338).